A 197-amino-acid chain; its full sequence is ATP synthase subunit delta (197 aa).

The span at 1–16 (MSSAVSASPQAASPQQ) shows a compositional bias: low complexity. The tract at residues 1 to 20 (MSSAVSASPQAASPQQDRTS) is disordered.

This sequence belongs to the ATPase delta chain family. In terms of assembly, F-type ATPases have 2 components, F(1) - the catalytic core - and F(0) - the membrane proton channel. F(1) has five subunits: alpha(3), beta(3), gamma(1), delta(1), epsilon(1). F(0) has three main subunits: a(1), b(2) and c(10-14). The alpha and beta chains form an alternating ring which encloses part of the gamma chain. F(1) is attached to F(0) by a central stalk formed by the gamma and epsilon chains, while a peripheral stalk is formed by the delta and b chains.

It is found in the cell inner membrane. In terms of biological role, f(1)F(0) ATP synthase produces ATP from ADP in the presence of a proton or sodium gradient. F-type ATPases consist of two structural domains, F(1) containing the extramembraneous catalytic core and F(0) containing the membrane proton channel, linked together by a central stalk and a peripheral stalk. During catalysis, ATP synthesis in the catalytic domain of F(1) is coupled via a rotary mechanism of the central stalk subunits to proton translocation. Functionally, this protein is part of the stalk that links CF(0) to CF(1). It either transmits conformational changes from CF(0) to CF(1) or is implicated in proton conduction. This Acidiphilium cryptum (strain JF-5) protein is ATP synthase subunit delta.